A 442-amino-acid chain; its full sequence is NALCN channel auxiliary factor 2 (442 aa).

A helical transmembrane segment spans residues 42 to 62 (LASLLFFTVLLSNHLWLVSAG). 5 N-linked (GlcNAc...) asparagine glycosylation sites follow: Asn77, Asn100, Asn171, Asn279, and Asn354. Residues 406-426 (CVLVLMLLHTMASFSVVQNGV) form a helical membrane-spanning segment.

It belongs to the NALF family.

The protein resides in the membrane. In terms of biological role, probable component of the NALCN channel complex, a channel that regulates the resting membrane potential and controls neuronal excitability. The sequence is that of NALCN channel auxiliary factor 2 (nalf2) from Xenopus tropicalis (Western clawed frog).